Consider the following 330-residue polypeptide: G-protein coupled receptor 3 (330 aa).

Over 1–42 the chain is Extracellular; that stretch reads MMWGAGSPLAWLSAGSGNVNVSSVGPAEGPTGPAAPLPSPKA. The N-linked (GlcNAc...) asparagine glycan is linked to Asn-20. A helical transmembrane segment spans residues 43–62; that stretch reads WDVVLCISGTLVSCENALVV. Topologically, residues 63-74 are cytoplasmic; that stretch reads AIIVGTPAFRAP. A helical membrane pass occupies residues 75-98; the sequence is MFLLVGSLAVADLLAGLGLVLHFA. The Extracellular segment spans residues 99-110; that stretch reads AVFCIGSAEMSL. The helical transmembrane segment at 111-132 threads the bilayer; that stretch reads VLVGVLAMAFTASIGSLLAITV. Residues 133–153 lie on the Cytoplasmic side of the membrane; sequence DRYLSLYNALTYYSETTVTRT. Residues 154 to 173 traverse the membrane as a helical segment; sequence YVMLALVWGGALGLGLLPVL. Residues 174-198 are Extracellular-facing; the sequence is AWNCLDGLTTCGVVYPLSKNHLVVL. The chain crosses the membrane as a helical span at residues 199–217; that stretch reads AIAFFMVFGIMLQLYAQIC. Over 218-245 the chain is Cytoplasmic; it reads RIVCRHAQQIALQRHLLPASHYVATRKG. A helical membrane pass occupies residues 246–272; sequence IATLAVVLGAFAACWLPFTVYCLLGDA. Topologically, residues 273–277 are extracellular; that stretch reads HSPPL. Residues 278–299 form a helical membrane-spanning segment; sequence YTYLTLLPATYNSMINPIIYAF. Over 300-330 the chain is Cytoplasmic; that stretch reads RNQDVQKVLWAVCCCCSSSKIPFRSRSPSDV. Cys-313 carries S-palmitoyl cysteine lipidation. 3 positions are modified to phosphoserine: Ser-324, Ser-326, and Ser-328.

It belongs to the G-protein coupled receptor 1 family. In terms of tissue distribution, expressed predominantly in the central nervous system, and at low levels in the lung, kidney, testis, ovary and eye. Highly expressed in regions of the brain implicated in the Alzheimer disease.

Its subcellular location is the cell membrane. Functionally, constitutively active G-protein coupled receptor that maintains high 3'-5'-cyclic adenosine monophosphate (cAMP) levels that a plays a role in serveral processes including meiotic arrest in oocytes or neuronal development via activation of numerous intracellular signaling pathways. Acts as an essential activator of thermogenic adipocytes and drives thermogenesis via its intrinsic G(s)-coupling activity without the requirement of a ligand. Has a potential role in modulating a number of brain functions, including behavioral responses to stress, amyloid-beta peptide generation in neurons. Stimulates neurite outgrowth in cerebellar granular neurons modulated via PKA, ERK, and most strongly PI3K-mediated signaling pathways. The sequence is that of G-protein coupled receptor 3 (GPR3) from Homo sapiens (Human).